Reading from the N-terminus, the 430-residue chain is Uric acid permease PucK (430 aa).

The next 14 membrane-spanning stretches (helical) occupy residues 18-38 (MLAM…AIGL), 43-63 (LTYL…LQLW), 67-87 (YFGI…GPMI), 97-117 (AIYG…GFFG), 122-142 (FFPP…LIPT), 163-183 (LLGF…KGFI), 185-205 (SIAI…MGKV), 209-229 (EVLE…PPTF), 233-253 (AVVT…GVYF), 274-294 (AEGL…TAFS), 310-330 (VIAI…AAAL), 333-353 (VIPT…VISY), 369-389 (LLII…PALF), and 398-418 (VLAG…HAFF).

This sequence belongs to the nucleobase:cation symporter-2 (NCS2) (TC 2.A.40) family.

It localises to the cell membrane. Uptake of uric acid. The polypeptide is Uric acid permease PucK (pucK) (Bacillus subtilis (strain 168)).